We begin with the raw amino-acid sequence, 326 residues long: NADH-quinone oxidoreductase subunit H (326 aa).

Helical transmembrane passes span Ile-11 to Phe-31, Val-81 to Val-101, Ile-114 to Gly-134, Leu-154 to Phe-174, Leu-186 to Val-206, Phe-237 to Phe-257, Leu-265 to Ile-285, and Trp-302 to Trp-322.

The protein belongs to the complex I subunit 1 family. NDH-1 is composed of 13 different subunits. Subunits NuoA, H, J, K, L, M, N constitute the membrane sector of the complex.

It localises to the cell inner membrane. The enzyme catalyses a quinone + NADH + 5 H(+)(in) = a quinol + NAD(+) + 4 H(+)(out). Functionally, NDH-1 shuttles electrons from NADH, via FMN and iron-sulfur (Fe-S) centers, to quinones in the respiratory chain. The immediate electron acceptor for the enzyme in this species is believed to be ubiquinone. Couples the redox reaction to proton translocation (for every two electrons transferred, four hydrogen ions are translocated across the cytoplasmic membrane), and thus conserves the redox energy in a proton gradient. This subunit may bind ubiquinone. This is NADH-quinone oxidoreductase subunit H from Cronobacter sakazakii (strain ATCC BAA-894) (Enterobacter sakazakii).